Reading from the N-terminus, the 117-residue chain is Immunoglobulin kappa variable 1-33 (117 aa).

The signal sequence occupies residues 1–22 (MDMRVPAQLLGLLLLWLSGARC). The framework-1 stretch occupies residues 23–45 (DIQMTQSPSSLSASVGDRVTITC). The region spanning 24 to 117 (IQMTQSPSSL…YYCQQYDNLP (94 aa)) is the Ig-like domain. The cysteines at positions 45 and 110 are disulfide-linked. The complementarity-determining-1 stretch occupies residues 46-56 (QASQDISNYLN). The interval 57–71 (WYQQKPGKAPKLLIY) is framework-2. The tract at residues 72-78 (DASNLET) is complementarity-determining-2. The segment at 79–110 (GVPSRFSGSGSGTDFTFTISSLQPEDIATYYC) is framework-3. Residues 111 to 117 (QQYDNLP) are complementarity-determining-3.

In terms of assembly, immunoglobulins are composed of two identical heavy chains and two identical light chains; disulfide-linked.

The protein resides in the secreted. It localises to the cell membrane. Its function is as follows. V region of the variable domain of immunoglobulin light chains that participates in the antigen recognition. Immunoglobulins, also known as antibodies, are membrane-bound or secreted glycoproteins produced by B lymphocytes. In the recognition phase of humoral immunity, the membrane-bound immunoglobulins serve as receptors which, upon binding of a specific antigen, trigger the clonal expansion and differentiation of B lymphocytes into immunoglobulins-secreting plasma cells. Secreted immunoglobulins mediate the effector phase of humoral immunity, which results in the elimination of bound antigens. The antigen binding site is formed by the variable domain of one heavy chain, together with that of its associated light chain. Thus, each immunoglobulin has two antigen binding sites with remarkable affinity for a particular antigen. The variable domains are assembled by a process called V-(D)-J rearrangement and can then be subjected to somatic hypermutations which, after exposure to antigen and selection, allow affinity maturation for a particular antigen. This chain is Immunoglobulin kappa variable 1-33, found in Homo sapiens (Human).